The chain runs to 135 residues: Transcription antitermination protein NusB (135 aa).

This sequence belongs to the NusB family.

Involved in transcription antitermination. Required for transcription of ribosomal RNA (rRNA) genes. Binds specifically to the boxA antiterminator sequence of the ribosomal RNA (rrn) operons. The chain is Transcription antitermination protein NusB from Wolinella succinogenes (strain ATCC 29543 / DSM 1740 / CCUG 13145 / JCM 31913 / LMG 7466 / NCTC 11488 / FDC 602W) (Vibrio succinogenes).